Reading from the N-terminus, the 148-residue chain is Arginine repressor (148 aa).

Belongs to the ArgR family.

The protein localises to the cytoplasm. It participates in amino-acid biosynthesis; L-arginine biosynthesis [regulation]. Functionally, regulates arginine biosynthesis genes. The chain is Arginine repressor from Chloroherpeton thalassium (strain ATCC 35110 / GB-78).